A 314-amino-acid chain; its full sequence is Lipoyl synthase (314 aa).

[4Fe-4S] cluster is bound by residues cysteine 61, cysteine 66, cysteine 72, cysteine 87, cysteine 91, cysteine 94, and serine 301. In terms of domain architecture, Radical SAM core spans 73–290 (FGRGTATFMI…ERIATNLGFS (218 aa)).

The protein belongs to the radical SAM superfamily. Lipoyl synthase family. [4Fe-4S] cluster serves as cofactor.

It localises to the cytoplasm. It carries out the reaction [[Fe-S] cluster scaffold protein carrying a second [4Fe-4S](2+) cluster] + N(6)-octanoyl-L-lysyl-[protein] + 2 oxidized [2Fe-2S]-[ferredoxin] + 2 S-adenosyl-L-methionine + 4 H(+) = [[Fe-S] cluster scaffold protein] + N(6)-[(R)-dihydrolipoyl]-L-lysyl-[protein] + 4 Fe(3+) + 2 hydrogen sulfide + 2 5'-deoxyadenosine + 2 L-methionine + 2 reduced [2Fe-2S]-[ferredoxin]. Its pathway is protein modification; protein lipoylation via endogenous pathway; protein N(6)-(lipoyl)lysine from octanoyl-[acyl-carrier-protein]: step 2/2. Catalyzes the radical-mediated insertion of two sulfur atoms into the C-6 and C-8 positions of the octanoyl moiety bound to the lipoyl domains of lipoate-dependent enzymes, thereby converting the octanoylated domains into lipoylated derivatives. The chain is Lipoyl synthase from Nitrosomonas eutropha (strain DSM 101675 / C91 / Nm57).